Consider the following 213-residue polypeptide: Thymidylate kinase (213 aa).

Residue 11 to 18 (GGEGAGKT) coordinates ATP.

It belongs to the thymidylate kinase family.

It catalyses the reaction dTMP + ATP = dTDP + ADP. Phosphorylation of dTMP to form dTDP in both de novo and salvage pathways of dTTP synthesis. This Shouchella clausii (strain KSM-K16) (Alkalihalobacillus clausii) protein is Thymidylate kinase.